The sequence spans 183 residues: Translation initiation factor IF-3 (183 aa).

The protein belongs to the IF-3 family. Monomer.

The protein resides in the cytoplasm. In terms of biological role, IF-3 binds to the 30S ribosomal subunit and shifts the equilibrium between 70S ribosomes and their 50S and 30S subunits in favor of the free subunits, thus enhancing the availability of 30S subunits on which protein synthesis initiation begins. The sequence is that of Translation initiation factor IF-3 from Pseudomonas entomophila (strain L48).